The primary structure comprises 358 residues: Chorismate synthase (358 aa).

R46 and R52 together coordinate NADP(+). Residues 123 to 125, 239 to 240, G283, 298 to 302, and R324 each bind FMN; these read RSS, NA, and KSVAT.

The protein belongs to the chorismate synthase family. Homotetramer. FMNH2 serves as cofactor.

It carries out the reaction 5-O-(1-carboxyvinyl)-3-phosphoshikimate = chorismate + phosphate. It functions in the pathway metabolic intermediate biosynthesis; chorismate biosynthesis; chorismate from D-erythrose 4-phosphate and phosphoenolpyruvate: step 7/7. Functionally, catalyzes the anti-1,4-elimination of the C-3 phosphate and the C-6 proR hydrogen from 5-enolpyruvylshikimate-3-phosphate (EPSP) to yield chorismate, which is the branch point compound that serves as the starting substrate for the three terminal pathways of aromatic amino acid biosynthesis. This reaction introduces a second double bond into the aromatic ring system. The chain is Chorismate synthase from Parabacteroides distasonis (strain ATCC 8503 / DSM 20701 / CIP 104284 / JCM 5825 / NCTC 11152).